Here is a 795-residue protein sequence, read N- to C-terminus: Phenylalanine--tRNA ligase beta subunit (795 aa).

A tRNA-binding domain is found at 39-148 (AGSFHGVVVG…ADAPIGTDIR (110 aa)). Positions 401 to 476 (PKRATITLRR…RVYGYNNIPD (76 aa)) constitute a B5 domain. Mg(2+) is bound by residues Asp454, Asp460, Glu463, and Glu464. Residues 701-794 (SRFPANRRDI…LKERFQASLR (94 aa)) form the FDX-ACB domain.

The protein belongs to the phenylalanyl-tRNA synthetase beta subunit family. Type 1 subfamily. Tetramer of two alpha and two beta subunits. Mg(2+) is required as a cofactor.

It is found in the cytoplasm. The enzyme catalyses tRNA(Phe) + L-phenylalanine + ATP = L-phenylalanyl-tRNA(Phe) + AMP + diphosphate + H(+). The polypeptide is Phenylalanine--tRNA ligase beta subunit (pheT) (Escherichia coli (strain K12)).